A 72-amino-acid chain; its full sequence is Small ribosomal subunit protein bS20 (72 aa).

The protein belongs to the bacterial ribosomal protein bS20 family.

Its function is as follows. Binds directly to 16S ribosomal RNA. The polypeptide is Small ribosomal subunit protein bS20 (rpsT) (Klebsiella pneumoniae).